Reading from the N-terminus, the 368-residue chain is Glutaminyl-peptide cyclotransferase (368 aa).

The signal sequence occupies residues 1–23; sequence MAGERRDSKAAAFFCLAWALCLA. An N-linked (GlcNAc...) asparagine glycan is attached at Asn53. An intrachain disulfide couples Cys143 to Cys169. Asp164 is a binding site for Zn(2+). Glu207 functions as the Proton acceptor in the catalytic mechanism. Residue Glu208 participates in Zn(2+) binding. Asp254 serves as the catalytic Proton acceptor. N-linked (GlcNAc...) asparagine glycosylation occurs at Asn292. His336 is a binding site for Zn(2+). The N-linked (GlcNAc...) asparagine glycan is linked to Asn352.

Belongs to the glutaminyl-peptide cyclotransferase family. As to expression, expressed by the venom gland.

The protein resides in the secreted. It carries out the reaction N-terminal L-glutaminyl-[peptide] = N-terminal 5-oxo-L-prolyl-[peptide] + NH4(+). Its function is as follows. Responsible for the biosynthesis of pyroglutamyl peptides. Has a bias against acidic and tryptophan residues adjacent to the N-terminal glutaminyl residue and a lack of importance of chain length after the second residue. Also catalyzes N-terminal pyroglutamate formation. The sequence is that of Glutaminyl-peptide cyclotransferase (QPCT) from Boiga irregularis (Brown tree snake).